The primary structure comprises 187 residues: NAC domain-containing protein 104 (187 aa).

Residues 3-155 (LPPGFRFFPT…KWVICRVYEQ (153 aa)) enclose the NAC domain. The DNA-binding element occupies 94–161 (VGIKKYLTFY…VYEQNCSEEE (68 aa)). The disordered stretch occupies residues 118–142 (LPDSSSSSSRSSKRSSRASSSSHKP).

Expressed in root xylem vessels. Expressed in stems, vascular tissue of cauline leaves and tracheary elements of sepals.

It localises to the nucleus. Functionally, probable transcription factor that influences tracheary elements and xylem development by negatively regulating secondary cell wall fiber synthesis and programmed cell death. In Arabidopsis thaliana (Mouse-ear cress), this protein is NAC domain-containing protein 104.